Here is a 145-residue protein sequence, read N- to C-terminus: Transcriptional regulator MraZ (145 aa).

2 SpoVT-AbrB domains span residues T5–E49 and T78–V121.

The protein belongs to the MraZ family. Forms oligomers.

It localises to the cytoplasm. It is found in the nucleoid. The sequence is that of Transcriptional regulator MraZ from Ureaplasma urealyticum serovar 10 (strain ATCC 33699 / Western).